The following is a 617-amino-acid chain: Protein AsmA (617 aa).

At 1–3 (MRR) the chain is on the cytoplasmic side. The helical transmembrane segment at 4 to 24 (FLTTLMILLVVLVAGLSALVL) threads the bilayer. Topologically, residues 25–617 (LVNPNDFRDY…KDVKKLLEKM (593 aa)) are periplasmic. The span at 302-319 (TANGENGAAQQGQSQSTL) shows a compositional bias: polar residues. Residues 302 to 321 (TANGENGAAQQGQSQSTLPR) are disordered.

Belongs to the AsmA family.

It is found in the cell inner membrane. Its function is as follows. Could be involved in the assembly of outer membrane proteins. May indirectly influence the assembly of outer membrane proteins, potentially by altering outer membrane fluidity. Inhibits the assembly of mutant forms of outer membrane protein F (OmpF). The protein is Protein AsmA of Escherichia coli (strain K12).